The primary structure comprises 710 residues: E3 ubiquitin-protein ligase TRIM9 (710 aa).

The RING-type zinc finger occupies cysteine 10–histidine 50. The residue at position 41 (threonine 41) is a Phosphothreonine. 3 positions are modified to phosphoserine: serine 44, serine 46, and serine 49. 2 B box-type zinc fingers span residues alanine 163–proline 212 and arginine 224–leucine 266. Zn(2+) contacts are provided by cysteine 168, cysteine 171, cysteine 193, histidine 198, cysteine 229, histidine 232, cysteine 252, and histidine 258. A coiled-coil region spans residues histidine 273 to lysine 340. A COS domain is found at isoleucine 374–valine 432. Positions valine 440–valine 535 constitute a Fibronectin type-III domain. The 170-residue stretch at serine 533–phenylalanine 702 folds into the B30.2/SPRY domain.

The protein belongs to the TRIM/RBCC family. In terms of assembly, interacts with SNAP25. Auto-ubiquitinated. Poly-ubiquitinated in cultured cells, whereas it is monoubiquitinated in vitro. In terms of tissue distribution, brain. Highly expressed in the cerebral cortex (at protein level). Severely decreased in the affected brain areas in Parkinson disease and dementia with Lewy bodies.

The protein localises to the cytoplasm. It is found in the cell projection. It localises to the dendrite. Its subcellular location is the cytoplasmic vesicle. The protein resides in the secretory vesicle. The protein localises to the synaptic vesicle. It is found in the synapse. It localises to the cytoskeleton. It carries out the reaction S-ubiquitinyl-[E2 ubiquitin-conjugating enzyme]-L-cysteine + [acceptor protein]-L-lysine = [E2 ubiquitin-conjugating enzyme]-L-cysteine + N(6)-ubiquitinyl-[acceptor protein]-L-lysine.. The protein operates within protein modification; protein ubiquitination. In terms of biological role, E3 ubiquitin-protein ligase which ubiquitinates itself in cooperation with an E2 enzyme UBE2D2/UBC4 and serves as a targeting signal for proteasomal degradation. May play a role in regulation of neuronal functions and may also participate in the formation or breakdown of abnormal inclusions in neurodegenerative disorders. May act as a regulator of synaptic vesicle exocytosis by controlling the availability of SNAP25 for the SNARE complex formation. The sequence is that of E3 ubiquitin-protein ligase TRIM9 (TRIM9) from Homo sapiens (Human).